Here is a 503-residue protein sequence, read N- to C-terminus: Annexin A11 (503 aa).

Pro residues-rich tracts occupy residues G80–P117 and P123–S167. A disordered region spans residues G80–S172. 4 Annexin repeats span residues F198–K269, T270–Q341, S353–K425, and N429–G500. N6-acetyllysine is present on residues K246 and K253. At K477 the chain carries N6-acetyllysine.

The protein belongs to the annexin family. As to quaternary structure, interacts with S100A6. Interacts with PDCD6 in a calcium-dependent manner. Interacts with KIF23 during cytokinesis.

The protein resides in the cytoplasm. Its subcellular location is the melanosome. It localises to the nucleus envelope. The protein localises to the nucleus. It is found in the nucleoplasm. The protein resides in the cytoskeleton. Its subcellular location is the spindle. Functionally, required for midbody formation and completion of the terminal phase of cytokinesis. Binds specifically to calcyclin in a calcium-dependent manner. This Mus musculus (Mouse) protein is Annexin A11 (Anxa11).